The primary structure comprises 287 residues: uncharacterized protein (287 aa).

One can recognise an ATP-grasp domain in the interval 115–287 (PQNFDREWNP…NLAIELLKAI (173 aa)). Residues K145 and 178-188 (QKYITCSKGES) contribute to the ATP site. Mg(2+) contacts are provided by D248, E261, and N263. Residues D248, E261, and N263 each contribute to the Mn(2+) site.

The protein belongs to the RimK family.

This is an uncharacterized protein from Mycoplasma genitalium (strain ATCC 33530 / DSM 19775 / NCTC 10195 / G37) (Mycoplasmoides genitalium).